The sequence spans 241 residues: Probable 2-phosphosulfolactate phosphatase (241 aa).

It belongs to the ComB family. Requires Mg(2+) as cofactor.

It carries out the reaction (2R)-O-phospho-3-sulfolactate + H2O = (2R)-3-sulfolactate + phosphate. This is Probable 2-phosphosulfolactate phosphatase from Gloeothece citriformis (strain PCC 7424) (Cyanothece sp. (strain PCC 7424)).